Here is a 94-residue protein sequence, read N- to C-terminus: MTKSELIERLCAEQTHLSAKEVEDAVKDILEHMASTLESGDRIEIRGFGSFSLHYREPRVGRNPKTGDKVELEGKYVPHFKPGKELRERVNLGS.

It belongs to the bacterial histone-like protein family. In terms of assembly, heterodimer of an alpha and a beta chain.

This protein is one of the two subunits of integration host factor, a specific DNA-binding protein that functions in genetic recombination as well as in transcriptional and translational control. The polypeptide is Integration host factor subunit beta (Vibrio campbellii (strain ATCC BAA-1116)).